We begin with the raw amino-acid sequence, 390 residues long: GTPase Obg (390 aa).

One can recognise an Obg domain in the interval 1–159 (MKFVDEATIL…RDLQLELMLL (159 aa)). Positions 127–146 (NTRFKSSVNRTPRQKTMGTP) are disordered. Polar residues predominate over residues 129–143 (RFKSSVNRTPRQKTM). The 174-residue stretch at 160–333 (ADVGMLGMPN…LCWDVMHFII (174 aa)) folds into the OBG-type G domain. GTP contacts are provided by residues 166 to 173 (GMPNAGKS), 191 to 195 (FTTLV), 213 to 216 (DIPG), 283 to 286 (NKID), and 314 to 316 (SAA). Mg(2+) contacts are provided by Ser173 and Thr193. Residues 364–384 (MEAEAEEEWDDDWDEDDDEGV) show a composition bias toward acidic residues. The disordered stretch occupies residues 364-390 (MEAEAEEEWDDDWDEDDDEGVEIVYQR).

It belongs to the TRAFAC class OBG-HflX-like GTPase superfamily. OBG GTPase family. In terms of assembly, monomer. Mg(2+) is required as a cofactor.

The protein localises to the cytoplasm. Functionally, an essential GTPase which binds GTP, GDP and possibly (p)ppGpp with moderate affinity, with high nucleotide exchange rates and a fairly low GTP hydrolysis rate. Plays a role in control of the cell cycle, stress response, ribosome biogenesis and in those bacteria that undergo differentiation, in morphogenesis control. This is GTPase Obg from Cronobacter sakazakii (strain ATCC BAA-894) (Enterobacter sakazakii).